We begin with the raw amino-acid sequence, 182 residues long: ADP-ribosylation factor 1 (182 aa).

G2 carries N-myristoyl glycine lipidation. GTP is bound by residues G24–T31, D67–Q71, and N126–D129.

Belongs to the small GTPase superfamily. Arf family.

The protein localises to the golgi apparatus. It carries out the reaction GTP + H2O = GDP + phosphate + H(+). Its function is as follows. GTP-binding protein involved in protein trafficking; may modulate vesicle budding and uncoating within the Golgi apparatus. The chain is ADP-ribosylation factor 1 (ARF1) from Brassica rapa subsp. pekinensis (Chinese cabbage).